The primary structure comprises 253 residues: Probable transcriptional regulatory protein Tpet_0454 (253 aa).

Belongs to the TACO1 family.

The protein resides in the cytoplasm. The sequence is that of Probable transcriptional regulatory protein Tpet_0454 from Thermotoga petrophila (strain ATCC BAA-488 / DSM 13995 / JCM 10881 / RKU-1).